The chain runs to 94 residues: Protein SpdA (94 aa).

A helical transmembrane segment spans residues 41–68 (GPILLALVAAGGSVGVVMTLCLLLQTAA).

The protein localises to the cell membrane. Involved in plasmid transfer. This Streptomyces lividans protein is Protein SpdA (spdA).